The primary structure comprises 29 residues: Potassium-transporting ATPase KdpF subunit (29 aa).

The helical transmembrane segment at Leu2–Val22 threads the bilayer.

Belongs to the KdpF family. The system is composed of three essential subunits: KdpA, KdpB and KdpC. The complex also contains KdpF, a small non-essential subunit.

It localises to the cell membrane. Functionally, part of the high-affinity ATP-driven potassium transport (or Kdp) system, which catalyzes the hydrolysis of ATP coupled with the electrogenic transport of potassium into the cytoplasm. This subunit may be involved in stabilization of the complex. The Kdp system is essential for growth under K(+) limitation, and for survival under desiccation and salt crystal inclusion. In Halobacterium salinarum (strain ATCC 29341 / DSM 671 / R1), this protein is Potassium-transporting ATPase KdpF subunit.